Consider the following 142-residue polypeptide: Ribonuclease VapC25 (142 aa).

The 137-residue stretch at 3–139 (LIDVNVLLAA…ARFASVRHIR (137 aa)) folds into the PINc domain. D5 and D108 together coordinate Mg(2+).

This sequence belongs to the PINc/VapC protein family. Mg(2+) is required as a cofactor.

Its function is as follows. Toxic component of a type II toxin-antitoxin (TA) system. An RNase. Upon expression in M.smegmatis inhibits colony formation. Its toxic effect is neutralized by coexpression with cognate antitoxin VapB25. The polypeptide is Ribonuclease VapC25 (Mycobacterium tuberculosis (strain ATCC 25618 / H37Rv)).